The primary structure comprises 181 residues: Adenylyl-sulfate kinase (181 aa).

13–20 lines the ATP pocket; that stretch reads GVSGAGKS. Ser87 functions as the Phosphoserine intermediate in the catalytic mechanism.

Belongs to the APS kinase family.

The catalysed reaction is adenosine 5'-phosphosulfate + ATP = 3'-phosphoadenylyl sulfate + ADP + H(+). The protein operates within sulfur metabolism; hydrogen sulfide biosynthesis; sulfite from sulfate: step 2/3. Its function is as follows. Catalyzes the synthesis of activated sulfate. This Burkholderia ambifaria (strain ATCC BAA-244 / DSM 16087 / CCUG 44356 / LMG 19182 / AMMD) (Burkholderia cepacia (strain AMMD)) protein is Adenylyl-sulfate kinase.